The sequence spans 226 residues: Protein FATTY ACID EXPORT 1, chloroplastic (226 aa).

The N-terminal 39 residues, 1–39, are a transit peptide targeting the chloroplast; sequence MASQISQLACFSSTNRQFHFQSRSFPCPMIRPQSFVVKS. The interval 66–87 is disordered; sequence SKPYSTVDETATNKESITEPVE. The segment covering 67 to 80 has biased composition (polar residues); sequence KPYSTVDETATNKE. 3 helical membrane-spanning segments follow: residues 130–150, 158–178, and 186–206; these read LSTGVLYGGGLLALSTLSLKI, FPYILGQAVLSAVVFWKNFTA, and FPAGVFAVISACMLCFYSYVV.

This sequence belongs to the TMEM14 family. In terms of tissue distribution, expressed in cotyledons, leaves, sepals and pollen.

It is found in the plastid. The protein localises to the chloroplast inner membrane. Mediates the export of free fatty acid from the plastids. Potentially prefers palmitic acid (C16:0) over oleic acid (C18:1) and stearic acid (C18:0). Not involved in fatty acid activation. Required for biogenesis of the outer pollen cell wall, in particular for the assembly of exine and pollen coat and for the release of ketone wax components. This Arabidopsis thaliana (Mouse-ear cress) protein is Protein FATTY ACID EXPORT 1, chloroplastic.